We begin with the raw amino-acid sequence, 247 residues long: Proteasome subunit alpha type-7 (247 aa).

This sequence belongs to the peptidase T1A family. As to quaternary structure, the 26S proteasome consists of a 20S proteasome core and two 19S regulatory subunits. The 20S proteasome core is composed of 28 subunits that are arranged in four stacked rings, resulting in a barrel-shaped structure. The two end rings are each formed by seven alpha subunits, and the two central rings are each formed by seven beta subunits. The catalytic chamber with the active sites is on the inside of the barrel.

It localises to the cytoplasm. The protein resides in the nucleus. Its function is as follows. The proteasome is a multicatalytic proteinase complex which is characterized by its ability to cleave peptides with Arg, Phe, Tyr, Leu, and Glu adjacent to the leaving group at neutral or slightly basic pH. The proteasome has an ATP-dependent proteolytic activity. The protein is Proteasome subunit alpha type-7 (PSA4) of Trypanosoma brucei brucei.